A 308-amino-acid chain; its full sequence is Eukaryotic translation initiation factor 3 subunit G (308 aa).

Residues M1–E23 are disordered. In terms of domain architecture, RRM spans P225–P303.

This sequence belongs to the eIF-3 subunit G family. As to quaternary structure, component of the eukaryotic translation initiation factor 3 (eIF-3) complex.

It localises to the cytoplasm. In terms of biological role, RNA-binding component of the eukaryotic translation initiation factor 3 (eIF-3) complex, which is involved in protein synthesis of a specialized repertoire of mRNAs and, together with other initiation factors, stimulates binding of mRNA and methionyl-tRNAi to the 40S ribosome. The eIF-3 complex specifically targets and initiates translation of a subset of mRNAs involved in cell proliferation. This subunit can bind 18S rRNA. This chain is Eukaryotic translation initiation factor 3 subunit G, found in Mycosarcoma maydis (Corn smut fungus).